The primary structure comprises 1407 residues: Enhancer of mRNA-decapping protein 4 (1407 aa).

N-acetylalanine is present on A2. Residues S3 and S6 each carry the phosphoserine modification. K125 carries the N6-acetyllysine modification. WD repeat units follow at residues 174–214 (GFTG…GKIQ), 230–277 (NHFR…SSHS), 295–334 (GHST…QDEP), and 342–393 (PHDG…CLQT). The interval 547-566 (GESRPELGSEGLASAPHGSQ) is disordered. 4 positions are modified to phosphoserine: S560, S565, S583, and S585. Disordered stretches follow at residues 604 to 632 (SLQQ…SSSS) and 673 to 745 (SSSS…STAL). Low complexity-rich tracts occupy residues 609 to 632 (SASP…SSSS) and 673 to 693 (SSSS…LPGP). A phosphoserine mark is found at S681, S713, S728, and S730. Residues 727–745 (ASPSRTRSPDVISSASTAL) show a composition bias toward polar residues. T732 is modified (phosphothreonine). Phosphoserine occurs at positions 734 and 746. Residues 787–817 (PRPRQGPELSSQLGLDGGPGDGDRHSTPSLL) form a disordered region. T827 is subject to Phosphothreonine. Phosphoserine occurs at positions 850 and 877. A disordered region spans residues 875-951 (HDSQDTSAEQ…SRLTEHQVVE (77 aa)). T880 carries the post-translational modification Phosphothreonine. A phosphoserine mark is found at S881, S885, S893, S896, and S898. The residue at position 907 (T907) is a Phosphothreonine. Positions 972–1031 (HNQEELLQRLCAQLEGLQSTVTDHVERALETRHEQEQRRLERALAEGQQRGGQLQEQLTQ) form a coiled coil. S1386 carries the phosphoserine modification.

It belongs to the WD repeat EDC4 family. In terms of assembly, part of a decapping complex consisting of DCP1A, DCP2, EDC3, EDC4 and probably DDX6. Part of a complex consisting of DCP1A, EDC3, EDC4 and DDX6. Part of a complex consisting of DCP1B, EDC3, EDC4 and DDX6. Interacts with DCP2. Interacts with NBDY. Interacts with Tex19.1. Interacts with LSM14A. Interacts with DDX6.

The protein localises to the cytoplasm. It localises to the P-body. It is found in the nucleus. In the process of mRNA degradation, seems to play a role in mRNA decapping. Component of a complex containing DCP2 and DCP1A which functions in decapping of ARE-containing mRNAs. Promotes complex formation between DCP1A and DCP2. Enhances the catalytic activity of DCP2 (in vitro). The polypeptide is Enhancer of mRNA-decapping protein 4 (Edc4) (Rattus norvegicus (Rat)).